Reading from the N-terminus, the 187-residue chain is Putative glutathione-dependent formaldehyde-activating enzyme (187 aa).

The CENP-V/GFA domain occupies 20–166 (FPGGKLYCHC…FESVGLKTYD (147 aa)). Residues Cys27, Cys29, Cys48, Cys50, Cys53, Cys95, and Cys98 each contribute to the Zn(2+) site.

It belongs to the Gfa family. Requires Zn(2+) as cofactor.

It carries out the reaction S-(hydroxymethyl)glutathione = glutathione + formaldehyde. It functions in the pathway one-carbon metabolism; formaldehyde degradation; formate from formaldehyde (glutathione route): step 1/3. Its function is as follows. Catalyzes the condensation of formaldehyde and glutathione to S-hydroxymethylglutathione. The protein is Putative glutathione-dependent formaldehyde-activating enzyme of Talaromyces marneffei (strain ATCC 18224 / CBS 334.59 / QM 7333) (Penicillium marneffei).